Reading from the N-terminus, the 240-residue chain is Probable transcriptional regulatory protein HPG27_148 (240 aa).

It belongs to the TACO1 family.

It localises to the cytoplasm. The protein is Probable transcriptional regulatory protein HPG27_148 of Helicobacter pylori (strain G27).